Reading from the N-terminus, the 261-residue chain is Enolase-phosphatase E1 (261 aa).

Mg(2+)-binding residues include aspartate 16 and glutamate 18. Substrate contacts are provided by residues 153 to 154 (SS) and lysine 187. Aspartate 212 provides a ligand contact to Mg(2+).

It belongs to the HAD-like hydrolase superfamily. MasA/MtnC family. As to quaternary structure, monomer. Requires Mg(2+) as cofactor.

It localises to the cytoplasm. The protein resides in the nucleus. It catalyses the reaction 5-methylsulfanyl-2,3-dioxopentyl phosphate + H2O = 1,2-dihydroxy-5-(methylsulfanyl)pent-1-en-3-one + phosphate. Its pathway is amino-acid biosynthesis; L-methionine biosynthesis via salvage pathway; L-methionine from S-methyl-5-thio-alpha-D-ribose 1-phosphate: step 3/6. The protein operates within amino-acid biosynthesis; L-methionine biosynthesis via salvage pathway; L-methionine from S-methyl-5-thio-alpha-D-ribose 1-phosphate: step 4/6. Its function is as follows. Bifunctional enzyme that catalyzes the enolization of 2,3-diketo-5-methylthiopentyl-1-phosphate (DK-MTP-1-P) into the intermediate 2-hydroxy-3-keto-5-methylthiopentenyl-1-phosphate (HK-MTPenyl-1-P), which is then dephosphorylated to form the acireductone 1,2-dihydroxy-3-keto-5-methylthiopentene (DHK-MTPene). This is Enolase-phosphatase E1 from Bos taurus (Bovine).